The chain runs to 729 residues: Denticleless protein homolog (729 aa).

An N-acetylmethionine modification is found at methionine 1. 3 WD repeats span residues 47–89 (GVPV…SKKT), 96–135 (AHWN…LMGT), and 138–178 (GHQC…KDGF). The short motif at 168–171 (WDTR) is the DDB1-binding motif element. Residues 189 to 198 (HNTADKQTPS) are compositionally biased toward polar residues. Positions 189 to 212 (HNTADKQTPSKPKKKQNSKGLAPA) are disordered. A Phosphothreonine modification is found at threonine 196. A Nuclear localization signal motif is present at residues 197-203 (PSKPKKK). WD repeat units follow at residues 214–253 (DSQQ…TAYR), 269–308 (TRKL…TSPV), 313–354 (GHQN…HPPT), and 358–398 (GHSQ…EEKP). A DDB1-binding motif motif is present at residues 243–246 (WDLR). 2 positions are modified to phosphoserine: serine 409 and serine 425. Disordered stretches follow at residues 416–445 (KACP…SSPS) and 460–491 (PSST…VSPK). Over residues 427–445 (STPAKAPRAKSSPSISSPS) the composition is skewed to low complexity. A compositionally biased stretch (polar residues) spans 460–475 (PSSTPTFSVKTTPATT). Threonine 463 bears the Phosphothreonine; by CDK1 and CDK2 mark. Low complexity predominate over residues 476–491 (RSSVSRRGSISSVSPK). Phosphoserine occurs at positions 484, 489, 494, and 511. Residues 504-546 (VTRTPSSSPPVTPPASETKISSPRKALIPVSQKSSQADACSES) are disordered. Residue threonine 515 is modified to Phosphothreonine. Serine 556 bears the Phosphoserine mark. Positions 596–607 (VLSQDSEGPTKS) are enriched in polar residues. Positions 596–705 (VLSQDSEGPT…GPVTITPSSM (110 aa)) are disordered. Composition is skewed to low complexity over residues 630–645 (EGCG…CGEG) and 674–688 (SSPR…SSRR). Phosphoserine is present on residues serine 675 and serine 678. 2 positions are modified to phosphothreonine: threonine 683 and threonine 701.

It belongs to the WD repeat cdt2 family. In terms of assembly, component of the DCX(DTL) E3 ubiquitin ligase complex (also called CRL4(CDT2)), at least composed of CUL4 (CUL4A or CUL4B), DDB1, DTL/CDT2 and RBX1. Interacts with CDKN1A and DDB1. Interacts with FBXO11; SCF(FBXWO11) controls DTL stability but DCX(DTL) does not control FBXO11 stability. Interacts with CRY1. Ubiquitinated by the anaphase promoting complex/cyclosome (APC/C). Autoubiquitinated through 'Lys-48'-polyubiquitin chains in a PCNA-independent reaction, allowing proteasomal turnover. Polyubiquitinated by SCF(FBXO11) when not phosphorylated, leading to its degradation. A tight regulation of the polyubiquitination by SCF(FBXO11) is involved in the control of different processes such as TGF-beta signaling, cell cycle progression and exit. Post-translationally, phosphorylated at Thr-463 by CDK1/Cyclin B and CDK2/Cycnlin A but not by CDK2/Cyclin E, MAPK1 or PLK1. Phosphorylation at Thr-463 inhibits the interaction with FBXO11 and decreases upon cell cycle exit induced by TGF-beta or serum starvation.

It localises to the nucleus. Its subcellular location is the nucleus membrane. The protein localises to the cytoplasm. It is found in the cytoskeleton. The protein resides in the microtubule organizing center. It localises to the centrosome. Its subcellular location is the chromosome. Its pathway is protein modification; protein ubiquitination. Substrate-specific adapter of a DCX (DDB1-CUL4-X-box) E3 ubiquitin-protein ligase complex required for cell cycle control, DNA damage response and translesion DNA synthesis. The DCX(DTL) complex, also named CRL4(CDT2) complex, mediates the polyubiquitination and subsequent degradation of CDT1, CDKN1A/p21(CIP1), FBH1, KMT5A and SDE2. CDT1 degradation in response to DNA damage is necessary to ensure proper cell cycle regulation of DNA replication. CDKN1A/p21(CIP1) degradation during S phase or following UV irradiation is essential to control replication licensing. KMT5A degradation is also important for a proper regulation of mechanisms such as TGF-beta signaling, cell cycle progression, DNA repair and cell migration. Most substrates require their interaction with PCNA for their polyubiquitination: substrates interact with PCNA via their PIP-box, and those containing the 'K+4' motif in the PIP box, recruit the DCX(DTL) complex, leading to their degradation. In undamaged proliferating cells, the DCX(DTL) complex also promotes the 'Lys-164' monoubiquitination of PCNA, thereby being involved in PCNA-dependent translesion DNA synthesis. The DDB1-CUL4A-DTL E3 ligase complex regulates the circadian clock function by mediating the ubiquitination and degradation of CRY1. This is Denticleless protein homolog (Dtl) from Mus musculus (Mouse).